The following is a 70-amino-acid chain: U-scutigerotoxin(02)-Tl1a (70 aa).

The first 17 residues, 1–17 (MKYILLGLLLMVVLANA), serve as a signal peptide directing secretion.

It belongs to the scutigerotoxin-02 family. Contains 4 disulfide bonds. Expressed by the venom gland.

It localises to the secreted. The chain is U-scutigerotoxin(02)-Tl1a from Thereuopoda longicornis (Long-legged centipede).